A 259-amino-acid chain; its full sequence is uncharacterized protein (259 aa).

Transmembrane regions (helical) follow at residues 9–31 (ILSVLTLFIFFQYVAKFGILESL), 84–106 (LLGGEILDGLAFGFFFLVYLQWF), 126–148 (FLIYRFAITLFGSTICFYRFVFG), 153–175 (SIVAGILTFALFLSQRALNLEYV), 196–215 (HFILSAPAMGVGATAGYIAA), and 230–252 (TFRAFLLLTIVVVCILTLGSWLG).

Its subcellular location is the cell membrane. This is an uncharacterized protein from Archaeoglobus fulgidus (strain ATCC 49558 / DSM 4304 / JCM 9628 / NBRC 100126 / VC-16).